A 184-amino-acid polypeptide reads, in one-letter code: Guanylate kinase (184 aa).

The 179-residue stretch at 5–183 (KKLIIITGPS…TVKEVLKIIK (179 aa)) folds into the Guanylate kinase-like domain. ATP is bound at residue 12–19 (GPSGVGKG).

Belongs to the guanylate kinase family.

It localises to the cytoplasm. It catalyses the reaction GMP + ATP = GDP + ADP. Essential for recycling GMP and indirectly, cGMP. The chain is Guanylate kinase from Prochlorococcus marinus subsp. pastoris (strain CCMP1986 / NIES-2087 / MED4).